The chain runs to 313 residues: Monoglyceride lipase (313 aa).

Residues 121–125 carry the GXSXG motif; sequence GHSMG. Ser-123 acts as the Nucleophile in catalysis. Residues Asp-251 and His-281 each act as charge relay system in the active site.

This sequence belongs to the AB hydrolase superfamily. Monoacylglycerol lipase family.

It localises to the lipid droplet. Its subcellular location is the cytoplasm. The protein resides in the endoplasmic reticulum. It is found in the mitochondrion outer membrane. It catalyses the reaction Hydrolyzes glycerol monoesters of long-chain fatty acids.. It carries out the reaction a fatty acid ethyl ester + H2O = ethanol + a fatty acid + H(+). The enzyme catalyses 1-(9Z-octadecenoyl)-glycerol + H2O = glycerol + (9Z)-octadecenoate + H(+). The catalysed reaction is 2-(9Z-octadecenoyl)-glycerol + H2O = glycerol + (9Z)-octadecenoate + H(+). It catalyses the reaction 1-hexadecanoylglycerol + H2O = glycerol + hexadecanoate + H(+). It carries out the reaction 2-hexadecanoylglycerol + H2O = glycerol + hexadecanoate + H(+). The enzyme catalyses ethyl hexadecanoate + H2O = ethanol + hexadecanoate + H(+). The catalysed reaction is ethyl (9Z)-octadecenoate + H2O = ethanol + (9Z)-octadecenoate + H(+). It catalyses the reaction ethyl (9Z)-hexadecenoate + H2O = (9Z)-hexadecenoate + ethanol + H(+). It carries out the reaction ethyl octadecanoate + H2O = ethanol + octadecanoate + H(+). Its pathway is glycerolipid metabolism; triacylglycerol degradation. In terms of biological role, converts monoacylglycerides (MAG) to free fatty acids and glycerol. Has a strong preference for monounsaturated monoglycerides. Required for efficient degradation of MAG, short-lived intermediates of glycerolipid metabolism which may also function as lipid signaling molecules. Controls inactivation of the signaling lipid N-palmitoylethanolamine (PEA). Involved in fatty acid ethyl ester (FAEE) catabolism. FAEEs are non-oxidative metabolites of ethanol that are transiently incorporated into lipid droplets (LDs). Their mobilization by LD-resident FAEE hydrolases facilitates a controlled metabolism of these potentially toxic lipid metabolites. The protein is Monoglyceride lipase (YJU3) of Saccharomyces cerevisiae (strain ATCC 204508 / S288c) (Baker's yeast).